Reading from the N-terminus, the 297-residue chain is uncharacterized protein (297 aa).

The chain crosses the membrane as a helical span at residues 191 to 211 (VMIILSCSNITILAVLSIVGL). Residues 275–287 (SKTSETQSVSGST) are compositionally biased toward polar residues. The disordered stretch occupies residues 275–297 (SKTSETQSVSGSTHSDEKLTAPM). Residues 288 to 297 (HSDEKLTAPM) are compositionally biased toward basic and acidic residues.

Its subcellular location is the host membrane. This is an uncharacterized protein from Cryphonectria parasitica mycoreovirus 1 (strain 9B21) (CpMYRV-1).